The chain runs to 161 residues: Phosphopantetheine adenylyltransferase (161 aa).

A substrate-binding site is contributed by serine 9. Residues 9–10 (SF) and histidine 17 contribute to the ATP site. 3 residues coordinate substrate: lysine 41, threonine 73, and arginine 87. Residues 88–90 (GLR), glutamate 98, and 123–129 (FAHISST) each bind ATP.

It belongs to the bacterial CoaD family. As to quaternary structure, homohexamer. Mg(2+) serves as cofactor.

The protein resides in the cytoplasm. It catalyses the reaction (R)-4'-phosphopantetheine + ATP + H(+) = 3'-dephospho-CoA + diphosphate. It participates in cofactor biosynthesis; coenzyme A biosynthesis; CoA from (R)-pantothenate: step 4/5. Reversibly transfers an adenylyl group from ATP to 4'-phosphopantetheine, yielding dephospho-CoA (dPCoA) and pyrophosphate. This Chloroflexus aurantiacus (strain ATCC 29366 / DSM 635 / J-10-fl) protein is Phosphopantetheine adenylyltransferase.